A 428-amino-acid polypeptide reads, in one-letter code: Probable dual-specificity RNA methyltransferase RlmN 2 (428 aa).

E142 (proton acceptor) is an active-site residue. In terms of domain architecture, Radical SAM core spans F148–D414. A disulfide bridge links C155 with C419. [4Fe-4S] cluster contacts are provided by C162, C166, and C169. A compositionally biased stretch (basic and acidic residues) spans M207–R228. A disordered region spans residues M207–T232. Residues G244–E245, S276, S299–H301, and N375 contribute to the S-adenosyl-L-methionine site. The active-site S-methylcysteine intermediate is the C419.

It belongs to the radical SAM superfamily. RlmN family. The cofactor is [4Fe-4S] cluster.

It is found in the cytoplasm. The catalysed reaction is adenosine(2503) in 23S rRNA + 2 reduced [2Fe-2S]-[ferredoxin] + 2 S-adenosyl-L-methionine = 2-methyladenosine(2503) in 23S rRNA + 5'-deoxyadenosine + L-methionine + 2 oxidized [2Fe-2S]-[ferredoxin] + S-adenosyl-L-homocysteine. The enzyme catalyses adenosine(37) in tRNA + 2 reduced [2Fe-2S]-[ferredoxin] + 2 S-adenosyl-L-methionine = 2-methyladenosine(37) in tRNA + 5'-deoxyadenosine + L-methionine + 2 oxidized [2Fe-2S]-[ferredoxin] + S-adenosyl-L-homocysteine. Its function is as follows. Specifically methylates position 2 of adenine 2503 in 23S rRNA and position 2 of adenine 37 in tRNAs. This is Probable dual-specificity RNA methyltransferase RlmN 2 from Opitutus terrae (strain DSM 11246 / JCM 15787 / PB90-1).